The following is a 243-amino-acid chain: Ras-related protein Rab-12 (243 aa).

An N-acetylmethionine modification is found at M1. The tract at residues 1–36 is disordered; that stretch reads MDPSAALHRRPAGGGLGAVSPALSGGQARRRKQPPR. Residues S20 and S24 each carry the phosphoserine modification. Positions 51, 52, 53, 54, 55, 72, and 73 each coordinate GTP. Position 55 (T55) interacts with Mg(2+). Short sequence motifs (switch) lie at residues 64–78 and 96–113; these read DTFC…GVDF and DTAG…YYRS. Residues T73 and D96 each contribute to the Mg(2+) site. Residue G99 coordinates GTP. A Phosphoserine modification is found at S105. GTP is bound by residues N154, K155, D157, S185, A186, and K187. Residues C242 and C243 are each lipidated (S-geranylgeranyl cysteine).

Belongs to the small GTPase superfamily. Rab family. In terms of assembly, interacts with RABIF and OPTN. Interacts with LRRK2; interaction facilitates phosphorylation of Ser-105. Interacts with GDI1, GDI2 and CHM; these interactions are disrupted by phosphorylation on Ser-105. Interacts with RILPL1 and RILPL2; these interactions are dependent on phosphorylation of Ser-105. Mg(2+) serves as cofactor. In terms of processing, phosphorylation of Ser-105 in the switch II region by LRRK2 prevents the association of RAB regulatory proteins, including CHM and RAB GDP dissociation inhibitors GDI1 and GDI2. In terms of tissue distribution, highest levels in skeletal and cardiac muscle. Also found in comparable amounts in brain, spinal cord and lung. Also detected in testis where it is expressed by Sertoli cells of the seminiferous tubules (at protein level).

The protein resides in the recycling endosome membrane. It is found in the lysosome membrane. Its subcellular location is the golgi apparatus membrane. It localises to the cytoplasmic vesicle. The protein localises to the autophagosome. The enzyme catalyses GTP + H2O = GDP + phosphate + H(+). With respect to regulation, regulated by guanine nucleotide exchange factors (GEFs) including DENND3 which promote the exchange of bound GDP for free GTP. Regulated by GTPase activating proteins (GAPs) which increase the GTP hydrolysis activity. Inhibited by GDP dissociation inhibitors (GDIs). Its function is as follows. The small GTPases Rab are key regulators of intracellular membrane trafficking, from the formation of transport vesicles to their fusion with membranes. Rabs cycle between an inactive GDP-bound form and an active GTP-bound form that is able to recruit to membranes different sets of downstream effectors directly responsible for vesicle formation, movement, tethering and fusion. RAB12 may play a role in protein transport from recycling endosomes to lysosomes regulating, for instance, the degradation of the transferrin receptor. Involved in autophagy. The polypeptide is Ras-related protein Rab-12 (Rattus norvegicus (Rat)).